A 63-amino-acid polypeptide reads, in one-letter code: 2-hydroxymuconate tautomerase (63 aa).

Pro2 functions as the Proton acceptor; via imino nitrogen in the catalytic mechanism.

It belongs to the 4-oxalocrotonate tautomerase family. Homohexamer.

It catalyses the reaction (2Z,4E)-2-hydroxyhexa-2,4-dienedioate = (3E)-2-oxohex-3-enedioate. It functions in the pathway aromatic compound metabolism; salicylate degradation. Functionally, catalyzes the ketonization of 2-hydroxymuconate stereoselectively to yield 2-oxo-3-hexenedioate. This chain is 2-hydroxymuconate tautomerase (aphI), found in Comamonas testosteroni (Pseudomonas testosteroni).